The following is a 195-amino-acid chain: Protein GrpE (195 aa).

It belongs to the GrpE family. In terms of assembly, homodimer.

It localises to the cytoplasm. In terms of biological role, participates actively in the response to hyperosmotic and heat shock by preventing the aggregation of stress-denatured proteins, in association with DnaK and GrpE. It is the nucleotide exchange factor for DnaK and may function as a thermosensor. Unfolded proteins bind initially to DnaJ; upon interaction with the DnaJ-bound protein, DnaK hydrolyzes its bound ATP, resulting in the formation of a stable complex. GrpE releases ADP from DnaK; ATP binding to DnaK triggers the release of the substrate protein, thus completing the reaction cycle. Several rounds of ATP-dependent interactions between DnaJ, DnaK and GrpE are required for fully efficient folding. The sequence is that of Protein GrpE from Blochmanniella pennsylvanica (strain BPEN).